A 1290-amino-acid polypeptide reads, in one-letter code: DNA-directed RNA polymerase subunit beta' (1290 aa).

Residues Cys68, Cys70, Cys83, and Cys86 each contribute to the Zn(2+) site. Positions 530, 532, and 534 each coordinate Mg(2+). Zn(2+)-binding residues include Cys909, Cys985, Cys992, and Cys995.

Belongs to the RNA polymerase beta' chain family. In terms of assembly, the RNAP catalytic core consists of 2 alpha, 1 beta, 1 beta' and 1 omega subunit. When a sigma factor is associated with the core the holoenzyme is formed, which can initiate transcription. Mg(2+) is required as a cofactor. Requires Zn(2+) as cofactor.

It catalyses the reaction RNA(n) + a ribonucleoside 5'-triphosphate = RNA(n+1) + diphosphate. In terms of biological role, DNA-dependent RNA polymerase catalyzes the transcription of DNA into RNA using the four ribonucleoside triphosphates as substrates. This Mycoplasma pneumoniae (strain ATCC 29342 / M129 / Subtype 1) (Mycoplasmoides pneumoniae) protein is DNA-directed RNA polymerase subunit beta'.